The primary structure comprises 760 residues: MVDVQKRKKLLAKAAASASIPAIKGSVPLDSYDIKIIQYKNALYKLNELNRLLNVLVPHLKKKRDNDESYKIIPLVNFILSLCEGPIFNVSPVLAKRYHLLCRFQLIKLSEVQQRLSTNFIDVEGWMFPEEVPLDHYKSCIYNNSLQWKILNSLSCIAQNAIKIYNAKLRQILLERDAYKARSLPFDTSIIEDLLNPVEMTLILDLAVLINDPVRDKSTHSFYKLQWQVMEKLNSCVHSKIFPILRTYYNQLQKFSETRPTSLSNLQKDLPHWEWTLHRIYTFHLRVFSVLCVIISFSRQIFLPNKQHFLDIKTRLSSENVYHYDLIICELMALLSPECDDVTALFELQENLKFWTQTARTDNNSSRTPIFHLQPGLVVELFNNHICKIIPKLRSIMGLLSNWMDCWKYIEKNYKTFDETNDLRENLKEKLERDKALYLEVKNAKSKLKKKPSITKLPASSSPSPSPTSSASPSRQASLESIRTRARAHLASNSSRSPSVSPVRTTFNNKNAETKKSVVSPEKRKLINGRRPRSSSLQSYTNKQQTSYLNSTRHPSIAPPSKLNNQRSNSLQSSTMTLNQKIVQDTVRHLMNKSASTPNPSASSSLAPSPKVSSINNTSSGKSSSTLIANSSDTLAIETLTLDPESNSSELSIKRVRFAGVPPMTEAENPKPTKVGWYKKPAVLHYPPIPASAMIKPLQHKSKYNTLRQEEGFTFRKSLRDGLEWENGESGSETTMMPFGIEIKESTGHRIASKIRSKLR.

Disordered stretches follow at residues lysine 449 to serine 573 and lysine 593 to threonine 626. Low complexity-rich tracts occupy residues isoleucine 454–serine 474 and serine 494–threonine 506. Phosphoserine occurs at positions 497 and 501. Residues alanine 512–lysine 525 are compositionally biased toward basic and acidic residues. The segment covering serine 534 to histidine 554 has biased composition (polar residues). Composition is skewed to low complexity over residues serine 561–serine 573 and serine 594–threonine 626. Serine 609 carries the phosphoserine modification.

Belongs to the GIP4 family. Interacts with GLC7.

It localises to the cytoplasm. In terms of biological role, GLC7 phosphatase-regulatory protein involved in GLC7 subcellular redistribution and chromosome segregation. The sequence is that of GLC7-interacting protein 4 (GIP4) from Saccharomyces cerevisiae (strain ATCC 204508 / S288c) (Baker's yeast).